A 701-amino-acid chain; its full sequence is Ubiquitin thioesterase zranb1 (701 aa).

The RanBP2-type 1 zinc finger occupies 3 to 33 (EHGIKWACEYCTYENWPSAIKCTMCRAPRPS). Residues Cys10, Cys13, Cys24, and Cys27 each contribute to the Zn(2+) site. Residues 38-59 (TEEPFKNSTPDVGSMERESGSP) form a disordered region. A RanBP2-type 2 zinc finger spans residues 79–108 (TSTKWSCHMCTYLNWPRAIRCTQCLSQRRT). Cys85, Cys88, Cys99, and Cys102 together coordinate Zn(2+). A disordered region spans residues 108–129 (TRSPTESPQSSGSSLRAIPSPI). The segment covering 111–121 (PTESPQSSGSS) has biased composition (low complexity). The segment at 143–173 (IKGQHWTCSACTYENCAKAKKCVVCDHPTPN) adopts a RanBP2-type 3 zinc-finger fold. The Zn(2+) site is built by Cys150, Cys153, Cys164, and Cys167. Positions 198 to 220 (WRGGCSSSNSQRRSPPTSKRDSD) are disordered. The segment covering 202–214 (CSSSNSQRRSPPT) has biased composition (polar residues). ANK repeat units follow at residues 253-283 (RKTD…SGGD) and 306-333 (YTLV…QHAA). Residues 425–585 (LYALWNRTAG…RGHFSALVAM (161 aa)) form the OTU domain. Residue Cys436 is the Nucleophile of the active site. Catalysis depends on His578, which acts as the Proton acceptor.

The protein belongs to the peptidase C64 family.

Its subcellular location is the cytoplasm. The protein resides in the nucleus. It catalyses the reaction Thiol-dependent hydrolysis of ester, thioester, amide, peptide and isopeptide bonds formed by the C-terminal Gly of ubiquitin (a 76-residue protein attached to proteins as an intracellular targeting signal).. Its function is as follows. Ubiquitin thioesterase, which specifically hydrolyzes 'Lys-29'-linked and 'Lys-33'-linked diubiquitin. Also cleaves 'Lys-63'-linked chains, but with 40-fold less efficiency compared to 'Lys-29'-linked ones. Positive regulator of the Wnt signaling pathway that deubiquitinates apc protein, a negative regulator of Wnt-mediated transcription. Acts as a regulator of autophagy by mediating deubiquitination of pik3c3/vps34, thereby promoting autophagosome maturation. Plays a role in the regulation of cell morphology and cytoskeletal organization. Required in the stress fiber dynamics and cell migration. The chain is Ubiquitin thioesterase zranb1 (zranb1) from Xenopus tropicalis (Western clawed frog).